A 181-amino-acid chain; its full sequence is MVDSDGFRPNVGIILANAAGQVFWARRIGQNAWQFPQGGIKAQETPEEALFRELEEEVGLAPADVEVMGCTRGWLRYRLPRRLIRSRSRPVCIGQKQVWFLLRLVGEEEQVQLDRSERPEFDHWRWVDFWHPVQEVVFFKRRVYTRALQELGPLLFPDGLPRQPPVGRPRRSAPPRGCRRA.

The Nudix hydrolase domain maps to 6 to 149 (GFRPNVGIIL…KRRVYTRALQ (144 aa)). The short motif at 38-59 (GGIKAQETPEEALFRELEEEVG) is the Nudix box element. Residues 159 to 181 (GLPRQPPVGRPRRSAPPRGCRRA) form a disordered region. A compositionally biased stretch (basic residues) spans 168 to 181 (RPRRSAPPRGCRRA).

This sequence belongs to the Nudix hydrolase family. RppH subfamily. It depends on a divalent metal cation as a cofactor.

Functionally, accelerates the degradation of transcripts by removing pyrophosphate from the 5'-end of triphosphorylated RNA, leading to a more labile monophosphorylated state that can stimulate subsequent ribonuclease cleavage. The polypeptide is RNA pyrophosphohydrolase (Alkalilimnicola ehrlichii (strain ATCC BAA-1101 / DSM 17681 / MLHE-1)).